The following is a 315-amino-acid chain: Homoserine O-succinyltransferase (315 aa).

Cys142 serves as the catalytic Acyl-thioester intermediate. Residues Lys163 and Ser192 each contribute to the substrate site. His235 acts as the Proton acceptor in catalysis. Glu237 is an active-site residue. Arg249 is a substrate binding site.

This sequence belongs to the MetA family.

It is found in the cytoplasm. It carries out the reaction L-homoserine + succinyl-CoA = O-succinyl-L-homoserine + CoA. It participates in amino-acid biosynthesis; L-methionine biosynthesis via de novo pathway; O-succinyl-L-homoserine from L-homoserine: step 1/1. Its function is as follows. Transfers a succinyl group from succinyl-CoA to L-homoserine, forming succinyl-L-homoserine. The polypeptide is Homoserine O-succinyltransferase (Tolumonas auensis (strain DSM 9187 / NBRC 110442 / TA 4)).